The chain runs to 499 residues: Dual specificity protein kinase CLK2 (499 aa).

Residues 1-65 (MPHPRRYHSS…RSSYDDHSSD (65 aa)) form a disordered region. The span at 8–23 (HSSERGSRGSYHEHYQ) shows a compositional bias: basic and acidic residues. Over residues 24 to 33 (SRKHKRRRSR) the composition is skewed to basic residues. Phosphoserine; by PKB/AKT1 is present on Ser-34. The span at 47 to 65 (REDSYHVRSRSSYDDHSSD) shows a compositional bias: basic and acidic residues. Ser-98 carries the post-translational modification Phosphoserine; by autocatalysis. Tyr-99 carries the post-translational modification Phosphotyrosine; by autocatalysis. Residues 102 to 142 (HRENSSYRSQRSSRRKHRRRRRRSRTFSRSSSHSSRRAKSV) are disordered. Over residues 112 to 127 (RSSRRKHRRRRRRSRT) the composition is skewed to basic residues. Position 127 is a phosphothreonine; by PKB/AKT1 (Thr-127). Position 141 is a phosphoserine; by autocatalysis (Ser-141). Tyr-152 bears the Phosphotyrosine mark. Residues 163–479 (EIVSTLGEGT…GEALQHPFFA (317 aa)) enclose the Protein kinase domain. ATP-binding positions include 168–176 (LGEGTFGRV) and Lys-192. Catalysis depends on Asp-289, which acts as the Proton acceptor. At Thr-343 the chain carries Phosphothreonine; by PKB/AKT2.

The protein belongs to the protein kinase superfamily. CMGC Ser/Thr protein kinase family. Lammer subfamily. As to quaternary structure, interacts with RBMX and UBL5. Interacts with AKT1. Autophosphorylates on all three types of residues. Phosphorylation on Ser-34 and Thr-127 by AKT1 is induced by ionizing radiation or insulin. Phosphorylation plays a critical role in cell proliferation following low dose radiation and prevents cell death following high dose radiation. Phosphorylation at Thr-343 by PKB/AKT2 induces its kinase activity which is required for its stability. The phosphorylation status at Ser-141 influences its subnuclear localization; inhibition of phosphorylation at Ser-141 results in accumulation in the nuclear speckle.

The protein localises to the nucleus. It localises to the nucleus speckle. It carries out the reaction L-seryl-[protein] + ATP = O-phospho-L-seryl-[protein] + ADP + H(+). It catalyses the reaction L-threonyl-[protein] + ATP = O-phospho-L-threonyl-[protein] + ADP + H(+). The enzyme catalyses L-tyrosyl-[protein] + ATP = O-phospho-L-tyrosyl-[protein] + ADP + H(+). Its activity is regulated as follows. 5,6-dichloro-1-b-D-ribofuranosylbenzimidazole (DRB) inhibits autophosphorylation. TG003 inhibits its kinase activity and affects the regulation of alternative splicing mediated by phosphorylation of SR proteins. Its function is as follows. Dual specificity kinase acting on both serine/threonine and tyrosine-containing substrates. Phosphorylates serine- and arginine-rich (SR) proteins of the spliceosomal complex. May be a constituent of a network of regulatory mechanisms that enable SR proteins to control RNA splicing and can cause redistribution of SR proteins from speckles to a diffuse nucleoplasmic distribution. Acts as a suppressor of hepatic gluconeogenesis and glucose output by repressing PPARGC1A transcriptional activity on gluconeogenic genes via its phosphorylation. Phosphorylates PPP2R5B thereby stimulating the assembly of PP2A phosphatase with the PPP2R5B-AKT1 complex leading to dephosphorylation of AKT1. Phosphorylates: PTPN1, SRSF1 and SRSF3. Regulates the alternative splicing of tissue factor (F3) pre-mRNA in endothelial cells. Phosphorylates PAGE4 at several serine and threonine residues and this phosphorylation attenuates the ability of PAGE4 to potentiate the transcriptional activator activity of JUN. This Mus musculus (Mouse) protein is Dual specificity protein kinase CLK2 (Clk2).